Consider the following 371-residue polypeptide: MYEVDMTIIGGGLVGASIAWGLARSGTKPLVLDGADLDLRASRANFALVWVQGKGLHAPHYALWSDASARRWPTMANTLLDDSGIDVGLQQDGAFTFALSEEELEANRQDMESIELETNGRAPQFEVLDRQQTLDRVLGIGPEVVGSIYCAADGHVNALRLFHALHAAMERQGATYRPNHPVQSIEPTTGGFILKGEAFSILSRRIVLAAGLDNKRLAPMVGLSCPLKRSKGQILVTEKTQTALPCLSAGMRQADEGGIMIGDSEETDNTRISSSPDISAVLASRALRIFPALSDLNVVRSWTGFRVKTADGVPIYDHSERYPGAFLVACHSGVTLAANHALIVAQQIAAGQLEDELSVFSARRFHAQQAV.

Heterodimer of a subunit A and a subunit B.

It participates in opine metabolism; octopine degradation. Functionally, oxidative cleavage of octopine into L-arginine and pyruvate. This Agrobacterium tumefaciens (strain Ach5) protein is Opine oxidase subunit B (ooxB).